A 446-amino-acid chain; its full sequence is Baeyer-Villiger oxidase mdpL (446 aa).

It belongs to the AflY oxidoreductase family. Requires NADPH as cofactor.

The protein operates within secondary metabolite biosynthesis. Functionally, baeyer-Villiger oxidase; part of the gene cluster that mediates the biosynthesis of monodictyphenone, a prenyl xanthone derivative. The pathway begins with the synthesis of atrochrysone thioester by the polyketide synthase (PKS) mdpG. The atrochrysone carboxyl ACP thioesterase mdpF then breaks the thioester bond and releases the atrochrysone carboxylic acid from mdpG. The atrochrysone carboxylic acid is then converted to atrochrysone which is further transformed into emodin anthrone. The next step is performed by the anthrone oxygenase mdpH that catalyzes the oxidation of emodinanthrone to emodin. Emodin is further modified to yield monodictyphenone via several steps involving mdpB, mdpC mdpJ, mdpK and mdpL. These enzymes with xptA, xptB and xptC are also proposed to be involved in the synthesis of shamixanthone from emodin. Especially, direct reduction of emodin by the short chain dehydrogenase mdpC followed by dehydration catalyzed by the scytalone dehydratase-like protein mdpB gives loss of oxygen and formation of chrysophanol intermediate in two simple steps. The protein is Baeyer-Villiger oxidase mdpL of Emericella nidulans (strain FGSC A4 / ATCC 38163 / CBS 112.46 / NRRL 194 / M139) (Aspergillus nidulans).